The following is a 120-amino-acid chain: NAD(P)H-quinone oxidoreductase subunit 3, chloroplastic (120 aa).

3 helical membrane-spanning segments follow: residues 9-29 (IFWA…LISG), 64-84 (MFAL…PWAV), and 88-108 (ILGV…VVGS).

This sequence belongs to the complex I subunit 3 family. As to quaternary structure, NDH is composed of at least 16 different subunits, 5 of which are encoded in the nucleus.

It is found in the plastid. The protein localises to the chloroplast thylakoid membrane. It catalyses the reaction a plastoquinone + NADH + (n+1) H(+)(in) = a plastoquinol + NAD(+) + n H(+)(out). The catalysed reaction is a plastoquinone + NADPH + (n+1) H(+)(in) = a plastoquinol + NADP(+) + n H(+)(out). Its function is as follows. NDH shuttles electrons from NAD(P)H:plastoquinone, via FMN and iron-sulfur (Fe-S) centers, to quinones in the photosynthetic chain and possibly in a chloroplast respiratory chain. The immediate electron acceptor for the enzyme in this species is believed to be plastoquinone. Couples the redox reaction to proton translocation, and thus conserves the redox energy in a proton gradient. The chain is NAD(P)H-quinone oxidoreductase subunit 3, chloroplastic from Nymphaea alba (White water-lily).